The following is a 405-amino-acid chain: Pentatricopeptide repeat-containing protein At3g14580, mitochondrial (405 aa).

Residues 1 to 37 (MILRRLVLSATSNSNPRRSQSLSSSGVRILSSSSSDR) constitute a mitochondrion transit peptide. The disordered stretch occupies residues 13–44 (NSNPRRSQSLSSSGVRILSSSSSDRYTSSSQR). 8 PPR repeats span residues 94–124 (TESL…IKLE), 130–165 (SEEF…GCWP), 166–200 (SSKS…GVEI), 201–235 (DACC…KSRP), 236–270 (NVMT…RIEP), 271–305 (DTIT…GCEP), 306–340 (NPGT…GMRP), and 341–375 (SFLS…GFVP).

The protein belongs to the PPR family. P subfamily.

It is found in the mitochondrion. The protein is Pentatricopeptide repeat-containing protein At3g14580, mitochondrial of Arabidopsis thaliana (Mouse-ear cress).